Reading from the N-terminus, the 930-residue chain is Nonribosomal peptide synthetase acyN (930 aa).

Residues 15-436 (LDPQDNKISV…AGRAKETIIV (422 aa)) are adenylation (A) domain. Residues 567–646 (APSNETEATI…GLAGTLETLM (80 aa)) form the Carrier domain. S604 is modified (O-(pantetheine 4'-phosphoryl)serine). The interval 665–914 (PLWLVHPGVG…HYTMLGPDNI (250 aa)) is thioesterase (TE) domain.

This sequence belongs to the NRP synthetase family.

It catalyses the reaction 2 3-phenylpyruvate + 2 ATP = polyporic acid + 2 AMP + 2 diphosphate + H(+). Its pathway is secondary metabolite biosynthesis. Its activity is regulated as follows. Hydroxyphenylpyruvate acts more like a competitive inhibitor rather than a substrate. Nonribosomal peptide synthetase that mediates the biosynthesis of polyporic acid via the condensation of 2 phenylpyruvate units. Polyporic acid is further hydroxylaed by the cytochrome P450 monooxygenase MO6277 into less toxic ascocorynin. This is Nonribosomal peptide synthetase acyN from Ascocoryne sarcoides (Purple jellydisc fungus).